The chain runs to 942 residues: Isoleucine--tRNA ligase (942 aa).

A 'HIGH' region motif is present at residues 58–68; it reads PYANGDIHIGH. An L-isoleucyl-5'-AMP-binding site is contributed by Glu-566. A 'KMSKS' region motif is present at residues 607-611; the sequence is KMSKS. Residue Lys-610 coordinates ATP. Zn(2+) is bound by residues Cys-905, Cys-908, Cys-925, and Cys-928.

It belongs to the class-I aminoacyl-tRNA synthetase family. IleS type 1 subfamily. In terms of assembly, monomer. It depends on Zn(2+) as a cofactor.

It localises to the cytoplasm. The enzyme catalyses tRNA(Ile) + L-isoleucine + ATP = L-isoleucyl-tRNA(Ile) + AMP + diphosphate. Functionally, catalyzes the attachment of isoleucine to tRNA(Ile). As IleRS can inadvertently accommodate and process structurally similar amino acids such as valine, to avoid such errors it has two additional distinct tRNA(Ile)-dependent editing activities. One activity is designated as 'pretransfer' editing and involves the hydrolysis of activated Val-AMP. The other activity is designated 'posttransfer' editing and involves deacylation of mischarged Val-tRNA(Ile). The protein is Isoleucine--tRNA ligase of Vibrio parahaemolyticus serotype O3:K6 (strain RIMD 2210633).